A 459-amino-acid polypeptide reads, in one-letter code: Glycosyl hydrolase family 109 protein 1 (459 aa).

The tat-type signal signal peptide spans 1–31 (MHNIHRRHFLKAAGAVTAGLVTANIALNANA). NAD(+) contacts are provided by residues 64-65 (ER), Asp-86, 135-138 (WEWH), 155-156 (EV), and Asn-184. Residues Tyr-213, Arg-232, 244–247 (YPTH), and Tyr-326 each bind substrate. Tyr-244 contacts NAD(+).

The protein belongs to the Gfo/Idh/MocA family. Glycosyl hydrolase 109 subfamily. NAD(+) is required as a cofactor. Post-translationally, predicted to be exported by the Tat system. The position of the signal peptide cleavage has not been experimentally proven.

Its function is as follows. Glycosidase. This chain is Glycosyl hydrolase family 109 protein 1, found in Shewanella sp. (strain MR-4).